A 239-amino-acid chain; its full sequence is Purine nucleoside phosphorylase DeoD-type (239 aa).

Residue His-5 participates in a purine D-ribonucleoside binding. Phosphate-binding positions include Gly-21, Arg-25, Arg-44, and 88 to 91 (RVGS). A purine D-ribonucleoside contacts are provided by residues 180–182 (EME) and 204–205 (SD). Catalysis depends on Asp-205, which acts as the Proton donor.

This sequence belongs to the PNP/UDP phosphorylase family. In terms of assembly, homohexamer; trimer of homodimers.

It catalyses the reaction a purine D-ribonucleoside + phosphate = a purine nucleobase + alpha-D-ribose 1-phosphate. The enzyme catalyses a purine 2'-deoxy-D-ribonucleoside + phosphate = a purine nucleobase + 2-deoxy-alpha-D-ribose 1-phosphate. Its function is as follows. Catalyzes the reversible phosphorolytic breakdown of the N-glycosidic bond in the beta-(deoxy)ribonucleoside molecules, with the formation of the corresponding free purine bases and pentose-1-phosphate. This chain is Purine nucleoside phosphorylase DeoD-type, found in Citrobacter koseri (strain ATCC BAA-895 / CDC 4225-83 / SGSC4696).